The primary structure comprises 132 residues: Small ribosomal subunit protein uS8 (132 aa).

The protein belongs to the universal ribosomal protein uS8 family. In terms of assembly, part of the 30S ribosomal subunit. Contacts proteins S5 and S12.

Functionally, one of the primary rRNA binding proteins, it binds directly to 16S rRNA central domain where it helps coordinate assembly of the platform of the 30S subunit. The polypeptide is Small ribosomal subunit protein uS8 (Ehrlichia chaffeensis (strain ATCC CRL-10679 / Arkansas)).